We begin with the raw amino-acid sequence, 63 residues long: DNA gyrase inhibitor YacG (63 aa).

Zn(2+) contacts are provided by Cys9, Cys12, Cys28, and Cys32.

The protein belongs to the DNA gyrase inhibitor YacG family. In terms of assembly, interacts with GyrB. Zn(2+) is required as a cofactor.

Inhibits all the catalytic activities of DNA gyrase by preventing its interaction with DNA. Acts by binding directly to the C-terminal domain of GyrB, which probably disrupts DNA binding by the gyrase. This chain is DNA gyrase inhibitor YacG, found in Salmonella arizonae (strain ATCC BAA-731 / CDC346-86 / RSK2980).